Here is an 820-residue protein sequence, read N- to C-terminus: Serine/threonine-protein phosphatase 4 regulatory subunit 3-B (820 aa).

Positions 1 to 100 constitute a WH1 domain; the sequence is MSDTRRRVKV…DEIWEKICQV (100 aa). Positions 682–694 are enriched in acidic residues; it reads ELWFNEDDEEEGE. Disordered regions lie at residues 682–711 and 750–820; these read ELWF…DFPE and AANG…RLGS. The span at 701–711 shows a compositional bias: basic and acidic residues; sequence EKTKPEDDFPE. Composition is skewed to polar residues over residues 750-761 and 768-790; these read AANGANSTNSKS and PATS…STKG. Residues 798–809 show a composition bias toward acidic residues; that stretch reads YPDDEDEEEEED.

Belongs to the SMEK family. As to quaternary structure, serine/threonine-protein phosphatase 4 (PP4) occurs in different assemblies of the catalytic and one or more regulatory subunits.

Its function is as follows. Regulatory subunit of serine/threonine-protein phosphatase 4 (PP4). In Xenopus laevis (African clawed frog), this protein is Serine/threonine-protein phosphatase 4 regulatory subunit 3-B.